The following is a 98-amino-acid chain: ATP synthase subunit alpha, chloroplastic (98 aa).

This sequence belongs to the ATPase alpha/beta chains family. As to quaternary structure, F-type ATPases have 2 components, CF(1) - the catalytic core - and CF(0) - the membrane proton channel. CF(1) has five subunits: alpha(3), beta(3), gamma(1), delta(1), epsilon(1). CF(0) has four main subunits: a, b, b' and c.

It localises to the plastid. The protein resides in the chloroplast thylakoid membrane. The enzyme catalyses ATP + H2O + 4 H(+)(in) = ADP + phosphate + 5 H(+)(out). Functionally, produces ATP from ADP in the presence of a proton gradient across the membrane. The alpha chain is a regulatory subunit. The sequence is that of ATP synthase subunit alpha, chloroplastic (atpA) from Populus euphratica (Euphrates poplar).